We begin with the raw amino-acid sequence, 1051 residues long: Anucleate primary sterigmata protein B (1051 aa).

2 coiled-coil regions span residues 10-200 and 239-285; these read IDRL…YAIA and STLV…ELKL. A compositionally biased stretch (basic and acidic residues) spans 58–90; the sequence is KDNQGLKRKIRDLEKQLKDQQSDKESMLNHDPE. Disordered regions lie at residues 58–100 and 141–160; these read KDNQ…DRDH and LKSLNDGRPTGSDSGAREER. The segment covering 294-303 has biased composition (basic and acidic residues); it reads AGDSILDRSA. 4 disordered regions span residues 294-329, 877-902, 909-928, and 984-1051; these read AGDSILDRSASRAQGRPSSSISDRTGQSPIDDAERE, NHPRSRSTTAGVAGSPQSSTIDLAER, NTAAESPARSSIPQPAQMTN, and EERD…DIEV. The segment covering 309–321 has biased composition (polar residues); sequence RPSSSISDRTGQS. 2 coiled-coil regions span residues 325–743 and 787–878; these read DAER…RNSM and RNLL…LQNH. Polar residues-rich tracts occupy residues 877–897 and 916–928; these read NHPRSRSTTAGVAGSPQSSTI and ARSSIPQPAQMTN. Residues 950-1004 are a coiled coil; the sequence is NQEVWIKRLHELERRLKAEREARLLDRNGARRRLEERDAENKRLRAQLDRQRLRQ. Basic and acidic residues-rich tracts occupy residues 984–1001 and 1028–1040; these read EERDAENKRLRAQLDRQR and EGYREREEEHSSS.

The protein localises to the cytoplasm. Functionally, involved in regulation of nuclear migration. May be involved in regulating nuclear positioning. This is Anucleate primary sterigmata protein B (apsB) from Emericella nidulans (strain FGSC A4 / ATCC 38163 / CBS 112.46 / NRRL 194 / M139) (Aspergillus nidulans).